Here is a 659-residue protein sequence, read N- to C-terminus: DNA ligase (659 aa).

NAD(+) contacts are provided by residues 32-36 (DQQYD), 81-82 (SL), and E110. The active-site N6-AMP-lysine intermediate is K112. R133, E167, K282, and K306 together coordinate NAD(+). C399, C402, C415, and C420 together coordinate Zn(2+). Positions 582–659 (IKNNIFKNKK…QEHEFEELIK (78 aa)) constitute a BRCT domain.

Belongs to the NAD-dependent DNA ligase family. LigA subfamily. The cofactor is Mg(2+). It depends on Mn(2+) as a cofactor.

The catalysed reaction is NAD(+) + (deoxyribonucleotide)n-3'-hydroxyl + 5'-phospho-(deoxyribonucleotide)m = (deoxyribonucleotide)n+m + AMP + beta-nicotinamide D-nucleotide.. In terms of biological role, DNA ligase that catalyzes the formation of phosphodiester linkages between 5'-phosphoryl and 3'-hydroxyl groups in double-stranded DNA using NAD as a coenzyme and as the energy source for the reaction. It is essential for DNA replication and repair of damaged DNA. The chain is DNA ligase from Phytoplasma mali (strain AT).